Here is a 466-residue protein sequence, read N- to C-terminus: Vimentin (466 aa).

Low complexity predominate over residues 1-13 (MSTRSVSSSSYRR). The disordered stretch occupies residues 1-31 (MSTRSVSSSSYRRMFGGPGTASRPSSTRSYV). Position 2 is an N-acetylserine (Ser-2). The segment at 2–95 (STRSVSSSSY…FSLADAINTE (94 aa)) is head. At Ser-5 the chain carries Phosphoserine. Ser-7 is modified (phosphoserine; by PKA and PKC; alternate). A glycan (O-linked (GlcNAc) serine; alternate) is linked at Ser-7. Phosphoserine is present on Ser-8. A phosphoserine; by PKC mark is found at Ser-9 and Ser-10. Position 20 is a phosphothreonine (Thr-20). Ser-25 bears the Phosphoserine; by PKA and PKC mark. Ser-26 carries the phosphoserine; by PKC modification. Thr-33 is a glycosylation site (O-linked (GlcNAc) threonine). Ser-34 carries O-linked (GlcNAc) serine; alternate glycosylation. Residue Ser-34 is modified to Phosphoserine; by PKC; alternate. Phosphoserine; by CaMK2, PKA, PKC and ROCK2 is present on Ser-39. Residue Ser-42 is modified to Phosphoserine; by PKC. The residue at position 49 (Ser-49) is a Phosphoserine. Phosphotyrosine is present on Tyr-53. The residue at position 55 (Ser-55) is a Phosphoserine. Residue Ser-56 is modified to Phosphoserine; by CDK5 and CDK1. Tyr-61 is modified (phosphotyrosine). Ser-66 carries the phosphoserine; by PKA and PKC modification. Ser-72 bears the Phosphoserine; by AURKB and ROCK2 mark. Ser-83 carries the phosphoserine; by CaMK2 modification. Position 87 is a phosphoserine (Ser-87). The coil 1A stretch occupies residues 96 to 131 (FKNTRTNEKVELQELNDRFANYIDKVRFLEQQNKIL). Positions 96–131 (FKNTRTNEKVELQELNDRFANYIDKVRFLEQQNKIL) form a coiled coil. The region spanning 103–411 (EKVELQELND…KLLEGEESRI (309 aa)) is the IF rod domain. A Glycyl lysine isopeptide (Lys-Gly) (interchain with G-Cter in SUMO2) cross-link involves residue Lys-104. Tyr-117 is modified (phosphotyrosine). 3 positions are modified to N6-acetyllysine; alternate: Lys-120, Lys-129, and Lys-139. 2 positions are modified to N6-succinyllysine; alternate: Lys-120 and Lys-129. Glycyl lysine isopeptide (Lys-Gly) (interchain with G-Cter in SUMO2); alternate cross-links involve residues Lys-120, Lys-129, and Lys-139. The interval 132–153 (LAELEQLKGQGKSRLGDLYEEE) is linker 1. At Ser-144 the chain carries Phosphoserine. A coiled-coil region spans residues 154–245 (MRELRRQVDQ…KLHDEEIQEL (92 aa)). The interval 154–245 (MRELRRQVDQ…KLHDEEIQEL (92 aa)) is coil 1B. At Lys-168 the chain carries N6-acetyllysine. Lys-188 is subject to N6-acetyllysine; alternate. The residue at position 188 (Lys-188) is an N6-succinyllysine; alternate. Ser-214 carries the phosphoserine modification. Lys-223 carries the post-translational modification N6-acetyllysine; alternate. Lys-223 is covalently cross-linked (Glycyl lysine isopeptide (Lys-Gly) (interchain with G-Cter in SUMO2); alternate). Residue Ser-226 is modified to Phosphoserine. Lys-235 bears the N6-acetyllysine mark. Residues 246–268 (QAQIQEQHVQIDMDVSKPDLTAA) form a linker 12 region. Lys-262 is covalently cross-linked (Glycyl lysine isopeptide (Lys-Gly) (interchain with G-Cter in SUMO2)). The tract at residues 269-407 (LRDVRQQYES…ATYRKLLEGE (139 aa)) is coil 2. The residue at position 294 (Lys-294) is an N6-acetyllysine; alternate. N6-succinyllysine; alternate is present on Lys-294. A Glycyl lysine isopeptide (Lys-Gly) (interchain with G-Cter in SUMO2); alternate cross-link involves residue Lys-294. Ser-299 bears the Phosphoserine mark. A coiled-coil region spans residues 303 to 407 (NRNNDALRQA…ATYRKLLEGE (105 aa)). Lys-313 participates in a covalent cross-link: Glycyl lysine isopeptide (Lys-Gly) (interchain with G-Cter in SUMO2). Positions 326-329 (LTCE) match the [IL]-x-C-x-x-[DE] motif motif. Position 373 is an N6-acetyllysine; alternate (Lys-373). Lys-373 is covalently cross-linked (Glycyl lysine isopeptide (Lys-Gly) (interchain with G-Cter in SUMO2); alternate). Residues 408–466 (ESRISLPLPNFSSLNLRETNLDSLPLVDTHSKRTLLIKTVETRDGQVINETSQHHDDLE) form a tail region. Phosphoserine occurs at positions 409, 412, 419, and 420. Thr-426 is subject to Phosphothreonine. Ser-430 bears the Phosphoserine mark. Thr-436 is subject to Phosphothreonine. Phosphoserine is present on Ser-438. Lys-439 participates in a covalent cross-link: Glycyl lysine isopeptide (Lys-Gly) (interchain with G-Cter in SUMO2). Residue Lys-445 is modified to N6-acetyllysine; alternate. Lys-445 bears the N6-succinyllysine; alternate mark. Lys-445 participates in a covalent cross-link: Glycyl lysine isopeptide (Lys-Gly) (interchain with G-Cter in SUMO2); alternate. Lys-445 participates in a covalent cross-link: Glycyl lysine isopeptide (Lys-Gly) (interchain with G-Cter in SUMO1); alternate. Phosphothreonine occurs at positions 446 and 458. At Ser-459 the chain carries Phosphoserine.

This sequence belongs to the intermediate filament family. As to quaternary structure, homomer assembled from elementary dimers. Identified in complexes that contain VIM, EZR, AHNAK, BFSP1, BFSP2, ANK2, PLEC, PRX and spectrin. Interacts with BCAS3. Interacts with LGSN. Interacts with SYNM. Interacts (via rod region) with PLEC (via CH 1 domain). Interacts with STK33. Interacts with LARP6. Interacts with RAB8B. Interacts with TOR1A; the interaction associates TOR1A with the cytoskeleton. Interacts with TOR1AIP1. Interacts with TOR1AIP1. Interacts with DIAPH1. Interacts with EPPK1; interaction is dependent of higher-order structure of intermediate filament. Interacts with the non-receptor tyrosine kinase SRMS; the interaction leads to phosphorylation of VIM. Interacts with NOD2. Interacts (via head region) with CORO1C. Interacts with HDGF. Interacts with PRKCE (via phorbol-ester/DAG-type 2 domain). Interacts with BFSP2. Interacts with PPL. Interacts with PKP1 and PKP2. Interacts with SCRIB (via PDZ domains); the interaction protects SCRIB from proteasomal degradation and facilitates SCRIB localization to intermediate filaments, the interaction is reduced by cell contact inhibition. In terms of processing, one of the most prominent phosphoproteins in various cells of mesenchymal origin. Phosphorylation is enhanced during cell division, at which time vimentin filaments are significantly reorganized. Phosphorylation by PKN1 inhibits the formation of filaments. Filament disassembly during mitosis is promoted by phosphorylation at Ser-55 as well as by nestin. Phosphorylated at Ser-56 by CDK5 during neutrophil secretion in the cytoplasm. Phosphorylated by STK33. Phosphorylated on tyrosine residues by SRMS. S-nitrosylation is induced by interferon-gamma and oxidatively-modified low-densitity lipoprotein (LDL(ox)) possibly implicating the iNOS-S100A8/9 transnitrosylase complex.

The protein resides in the cytoplasm. Its subcellular location is the cytoskeleton. The protein localises to the nucleus matrix. It is found in the cell membrane. Vimentins are class-III intermediate filaments found in various non-epithelial cells, especially mesenchymal cells. Vimentin is attached to the nucleus, endoplasmic reticulum, and mitochondria, either laterally or terminally. Plays a role in cell directional movement, orientation, cell sheet organization and Golgi complex polarization at the cell migration front. Protects SCRIB from proteasomal degradation and facilitates its localization to intermediate filaments in a cell contact-mediated manner. In terms of biological role, involved with LARP6 in the stabilization of type I collagen mRNAs for CO1A1 and CO1A2. The protein is Vimentin (VIM) of Bos taurus (Bovine).